The following is a 1233-amino-acid chain: uncharacterized protein (1233 aa).

7 disordered regions span residues 1-39 (MVES…PSTN), 65-116 (QELS…DAIS), 160-211 (AEGT…TDLS), 250-577 (EKMD…DAPR), 594-825 (DLEV…NSEK), 851-872 (NKEN…NSEK), and 902-955 (EDVE…ENSK). Positions 72–83 (KSSKLKGHKKKN) are enriched in basic residues. Ser-180 is modified (phosphoserine). The span at 183–199 (TRRKKNKKKKTTNRRGR) shows a compositional bias: basic residues. Residues 201–211 (SSNPADTTDLS) show a composition bias toward polar residues. 2 stretches are compositionally biased toward basic and acidic residues: residues 250-280 (EKMD…ETSS) and 287-300 (NEEK…REEN). A compositionally biased stretch (polar residues) spans 329–345 (GQASTKDVESESLTKNG). 2 stretches are compositionally biased toward basic and acidic residues: residues 349-370 (KENE…DRDG) and 379-408 (NQKE…ELSV). Positions 409–422 (NHENNMSHNFNAAG) are enriched in polar residues. Residue Ser-462 is modified to Phosphoserine. A compositionally biased stretch (acidic residues) spans 466–478 (EKEEEEEEEEEEN). Composition is skewed to basic and acidic residues over residues 484-497 (VKKE…EAVR), 508-527 (STSK…EAGE), 594-622 (DLEV…DKIA), 631-672 (EDMK…KTPE), and 684-711 (RPED…DVKP). Ser-523 carries the phosphoserine modification. Polar residues predominate over residues 728–739 (QRVQISTEQAET). Residues 753–783 (FKEEEKPKRFEITQEGDKITGKDTNHEHGEA) are compositionally biased toward basic and acidic residues. The segment covering 855-868 (EDVEVDTEEDAEVE) has biased composition (acidic residues). Thr-861 carries the post-translational modification Phosphothreonine. Composition is skewed to basic and acidic residues over residues 910–920 (SKEDIETKCSE) and 935–948 (EVSK…TKED). Residue Ser-975 is modified to Phosphoserine. 2 disordered regions span residues 984 to 1071 (LPEL…PKKA) and 1109 to 1128 (KDST…KPQD). The segment covering 986–999 (ELEKQDIKDNKGED) has biased composition (basic and acidic residues). A phosphoserine mark is found at Ser-1037 and Ser-1046. Basic and acidic residues-rich tracts occupy residues 1062 to 1071 (QSTRENPKKA) and 1118 to 1127 (QSKKNNDKPQ). One can recognise a Glutaredoxin domain in the interval 1132-1233 (TSEIRKLNEK…KLRELIYDTI (102 aa)).

This is an uncharacterized protein from Saccharomyces cerevisiae (strain ATCC 204508 / S288c) (Baker's yeast).